The chain runs to 558 residues: CTP synthase (558 aa).

The segment at 1–271 is amidoligase domain; that stretch reads MAARQQTKHL…DAYVVRRLGL (271 aa). A CTP-binding site is contributed by serine 18. Serine 18 is a UTP binding site. ATP contacts are provided by residues 19–24 and aspartate 76; that span reads SLGKGL. Mg(2+)-binding residues include aspartate 76 and glutamate 145. Residues 152–154, 192–197, and lysine 228 each bind CTP; these read DIE and KTKPTQ. UTP is bound by residues 192 to 197 and lysine 228; that span reads KTKPTQ. Residues 296 to 545 enclose the Glutamine amidotransferase type-1 domain; the sequence is TIALVGKYVD…IRAALLHRCP (250 aa). Glycine 359 contributes to the L-glutamine binding site. Cysteine 386 (nucleophile; for glutamine hydrolysis) is an active-site residue. Residues 387–390, glutamate 410, and arginine 471 contribute to the L-glutamine site; that span reads LGLQ. Catalysis depends on residues histidine 518 and glutamate 520.

It belongs to the CTP synthase family. Homotetramer.

The enzyme catalyses UTP + L-glutamine + ATP + H2O = CTP + L-glutamate + ADP + phosphate + 2 H(+). It carries out the reaction L-glutamine + H2O = L-glutamate + NH4(+). The catalysed reaction is UTP + NH4(+) + ATP = CTP + ADP + phosphate + 2 H(+). It participates in pyrimidine metabolism; CTP biosynthesis via de novo pathway; CTP from UDP: step 2/2. Allosterically activated by GTP, when glutamine is the substrate; GTP has no effect on the reaction when ammonia is the substrate. The allosteric effector GTP functions by stabilizing the protein conformation that binds the tetrahedral intermediate(s) formed during glutamine hydrolysis. Inhibited by the product CTP, via allosteric rather than competitive inhibition. Catalyzes the ATP-dependent amination of UTP to CTP with either L-glutamine or ammonia as the source of nitrogen. Regulates intracellular CTP levels through interactions with the four ribonucleotide triphosphates. The chain is CTP synthase from Acidothermus cellulolyticus (strain ATCC 43068 / DSM 8971 / 11B).